A 619-amino-acid polypeptide reads, in one-letter code: Pentatricopeptide repeat-containing protein At1g68980, mitochondrial (619 aa).

Residues 1–100 constitute a mitochondrion transit peptide; that stretch reads MLRKTLTLIS…RAFVSTTYVI (100 aa). PPR repeat units follow at residues 186-221, 222-256, 257-292, 295-329, 366-400, 401-435, 436-466, 472-506, 507-541, and 542-576; these read DLVA…GVKP, DELS…GFAS, RRIL…GEAS, SEET…ESMS, GIGV…GLQL, DVET…RVAD, LKRC…VMED, KSHD…QYEP, NNQT…KAKL, and EHAL…KIFV.

The protein belongs to the PPR family. P subfamily.

The protein resides in the mitochondrion. This is Pentatricopeptide repeat-containing protein At1g68980, mitochondrial from Arabidopsis thaliana (Mouse-ear cress).